The primary structure comprises 171 residues: 3-hydroxydecanoyl-[acyl-carrier-protein] dehydratase (171 aa).

Histidine 70 is a catalytic residue.

This sequence belongs to the thioester dehydratase family. FabA subfamily. Homodimer.

The protein resides in the cytoplasm. It carries out the reaction a (3R)-hydroxyacyl-[ACP] = a (2E)-enoyl-[ACP] + H2O. The enzyme catalyses (3R)-hydroxydecanoyl-[ACP] = (2E)-decenoyl-[ACP] + H2O. It catalyses the reaction (2E)-decenoyl-[ACP] = (3Z)-decenoyl-[ACP]. Its pathway is lipid metabolism; fatty acid biosynthesis. Its function is as follows. Necessary for the introduction of cis unsaturation into fatty acids. Catalyzes the dehydration of (3R)-3-hydroxydecanoyl-ACP to E-(2)-decenoyl-ACP and then its isomerization to Z-(3)-decenoyl-ACP. Can catalyze the dehydratase reaction for beta-hydroxyacyl-ACPs with saturated chain lengths up to 16:0, being most active on intermediate chain length. The sequence is that of 3-hydroxydecanoyl-[acyl-carrier-protein] dehydratase from Xanthomonas oryzae pv. oryzae (strain MAFF 311018).